The following is a 364-amino-acid chain: Probable transcription factor At4g00390 (364 aa).

The segment at 1 to 149 is disordered; it reads MTKKLDPPTA…STKRVKKDEE (149 aa). Residues 13 to 32 show a composition bias toward acidic residues; it reads SDEDDVETSEDDSSSSEEDE. The segment covering 39–80 has biased composition (low complexity); the sequence is ATTAAAPAKSTAVSAATPAKSTSVSAAAPSKSTAVSAAADSD. Over residues 81–93 the composition is skewed to acidic residues; sequence SGSESETDSDSES.

Belongs to the GeBP family.

The chain is Probable transcription factor At4g00390 from Arabidopsis thaliana (Mouse-ear cress).